The following is a 257-amino-acid chain: Protein IMPACT homolog (257 aa).

The region spanning 9–102 (AEIESLASIF…SLVQDFIRDL (94 aa)) is the RWD domain.

It belongs to the IMPACT family. As to quaternary structure, interacts with gcn-1; prevents the interaction of gcn-1 with gcn-2 and inhibits gcn-2 kinase activity. Interaction with rpl-39; this interaction occurs in a gcn-1-independent manner. Associates with ribosomes; this interaction occurs in a gcn-1-independent manner. Associates with actin; this interaction occurs in a gcn-1-independent manner.

It localises to the cytoplasm. Functionally, translational regulator that ensures constant high levels of translation under amino acid starvation. Plays a role as a negative regulator of the gcn-2 kinase activity; impairs gcn-1-mediated gcn-2 activation, and hence gcn-2-mediated eIF-2-alpha phosphorylation and subsequent down-regulation of protein synthesis in amino acid-starved cells. Plays a role in differentiation of neuronal cells by stimulating neurite outgrowth. This Caenorhabditis elegans protein is Protein IMPACT homolog.